A 368-amino-acid chain; its full sequence is Cyanide hydratase (368 aa).

In terms of domain architecture, CN hydrolase spans 6 to 285 (YKAAVVTSEP…DGLMYVDIDL (280 aa)). Glu-46 functions as the Proton acceptor in the catalytic mechanism. Residue Lys-128 is part of the active site. The active-site Nucleophile is Cys-163. Positions 341–368 (LDRPLEEEDYRQGTDAGETEKASSNGHA) are disordered.

Belongs to the carbon-nitrogen hydrolase superfamily. Nitrilase family. Oligomer of dimers, forming left-handed helical fibers.

The catalysed reaction is formamide = hydrogen cyanide + H2O. In terms of biological role, catalyzes the hydration of cyanide to formamide. Degradation of cyanide may be important for plant pathogenic fungi in infection of cyanogenic plants. This chain is Cyanide hydratase, found in Microdochium sorghi (Zonate leaf spot disease fungus).